The sequence spans 469 residues: E3 ubiquitin-protein ligase pellino homolog 3 (469 aa).

Positions 1–39 are disordered; sequence MVLEGNPEVGSPRTSDLQHRGNKGSCVLSSPGEDAQPGE. Ser-11 carries the post-translational modification Phosphoserine.

The protein belongs to the pellino family. Interacts with TRAF6, MAP3K14 and MAP3K7. Phosphorylated by IRAK1 enhancing its E3 ligase activity. In terms of tissue distribution, highly expressed in brain, heart and testis, and at lower level in kidney, liver, lung, placenta, small intestine, spleen and stomach. Isoform 1 is not expressed in lung.

The catalysed reaction is S-ubiquitinyl-[E2 ubiquitin-conjugating enzyme]-L-cysteine + [acceptor protein]-L-lysine = [E2 ubiquitin-conjugating enzyme]-L-cysteine + N(6)-ubiquitinyl-[acceptor protein]-L-lysine.. Its pathway is protein modification; protein ubiquitination. Functionally, E3 ubiquitin ligase catalyzing the covalent attachment of ubiquitin moieties onto substrate proteins. Involved in the TLR and IL-1 signaling pathways via interaction with the complex containing IRAK kinases and TRAF6. Mediates 'Lys-63'-linked polyubiquitination of IRAK1. Can activate AP1/JUN and ELK1. Acts as a regulator of innate immunity by mediating 'Lys-63'-linked polyubiquitination of RIPK2 downstream of NOD1 and NOD2, thereby transforming RIPK2 into a scaffolding protein for downstream effectors, ultimately leading to activation of the NF-kappa-B and MAP kinases signaling. Catalyzes 'Lys-63'-linked polyubiquitination of RIPK2 in parallel of XIAP. The chain is E3 ubiquitin-protein ligase pellino homolog 3 from Homo sapiens (Human).